A 150-amino-acid polypeptide reads, in one-letter code: MNKTSVPSIDSIERQWFLVDAENQTLGRLATEVASVLRGKNKPSFTPHLDTGDFVVVVNADKIRVSGNKANQKLYRRHSGRPGGMKVETFQALQDRLPERIVEKAIKGMLPHNALGRQLFRKLKVYRGPEHPHSAQRPQTLQLNPAASSQ.

The tract at residues 129–150 is disordered; the sequence is PEHPHSAQRPQTLQLNPAASSQ. Residues 136-150 show a composition bias toward polar residues; it reads QRPQTLQLNPAASSQ.

It belongs to the universal ribosomal protein uL13 family. In terms of assembly, part of the 50S ribosomal subunit.

This protein is one of the early assembly proteins of the 50S ribosomal subunit, although it is not seen to bind rRNA by itself. It is important during the early stages of 50S assembly. In Prochlorococcus marinus (strain MIT 9303), this protein is Large ribosomal subunit protein uL13.